A 421-amino-acid polypeptide reads, in one-letter code: Zinc finger protein 584 (421 aa).

The KRAB domain maps to 17–88; that stretch reads VMFEDVTVYF…SWVDVTPVSR (72 aa). The segment covering 120-129 has biased composition (basic and acidic residues); sequence QHQDTHSEGK. The interval 120–146 is disordered; that stretch reads QHQDTHSEGKPRRHTEHGAAFPPGSSC. 8 consecutive C2H2-type zinc fingers follow at residues 159-181, 214-236, 242-264, 270-292, 298-320, 326-348, 354-376, and 382-404; these read FKCS…LITH, HVCN…QKVH, FKCS…QRIH, YECS…RKVH, YECT…QRVH, FECK…WKVH, YECS…QQFH, and YECT…KKVH. The disordered stretch occupies residues 402-421; that stretch reads KVHTPERRQEDRAHGKVVSC. Basic and acidic residues predominate over residues 404–415; the sequence is HTPERRQEDRAH.

It belongs to the krueppel C2H2-type zinc-finger protein family.

Its subcellular location is the nucleus. May be involved in transcriptional regulation. In Homo sapiens (Human), this protein is Zinc finger protein 584 (ZNF584).